Consider the following 29-residue polypeptide: Omega-conotoxin MVIIC (29 aa).

The propeptide occupies Thr1–Arg2. Cystine bridges form between Cys3/Cys18, Cys10/Cys22, and Cys17/Cys28. At Cys28 the chain carries Cysteine amide.

The protein belongs to the conotoxin O1 superfamily. Post-translationally, not hydroxylated; hydroxylation, on a synthetic hydroxylated MVIIC, has a significant impact on the oxidative folding but not on the biological activity. Expressed by the venom duct.

It is found in the secreted. Omega-conotoxins act at presynaptic membranes, they bind and block voltage-gated calcium channels (Cav). This toxin preferentially blocks P/Q-type calcium channels (Cav2.1/CACNA1A) (IC(50)=0.60 nM). Also shows an inhibition on Cav2.2/CACNA1A channels (IC(50)=7.0 nM). This Conus magus (Magical cone) protein is Omega-conotoxin MVIIC.